The chain runs to 493 residues: Activin receptor type-1C (493 aa).

A signal peptide spans 1–20 (MTRALCSALRQALLLLAAAA). Topologically, residues 22–113 (LSPGLKCVCL…PNAPKLGPME (92 aa)) are extracellular. The chain crosses the membrane as a helical span at residues 114 to 134 (LAIIITVPVCLLSIAAMLTVW). Topologically, residues 135 to 493 (ACQGRQCSYR…QLCVKEDCKA (359 aa)) are cytoplasmic. A GS domain is found at 165–194 (KTLKDLIYDVTASGSGSGLPLLVQRTIART). Residues 195–485 (IVLQEIVGKG…LRIKKTISQL (291 aa)) form the Protein kinase domain. ATP is bound by residues 201 to 209 (VGKGRFGEV) and Lys-222. Asp-323 acts as the Proton acceptor in catalysis.

Belongs to the protein kinase superfamily. TKL Ser/Thr protein kinase family. TGFB receptor subfamily. In terms of assembly, binds the type 2 receptor protein ACVR2A. It depends on Mg(2+) as a cofactor. Mn(2+) serves as cofactor. As to expression, present in pancreas, heart, colon, small intestine, ovary and the hippocampus, medulla oblongata and putamen of the brain. Isoform 1, isoform 2, isoform 3 and isoform 4 are all expressed in the placenta throughout pregnancy.

The protein resides in the membrane. The catalysed reaction is L-threonyl-[receptor-protein] + ATP = O-phospho-L-threonyl-[receptor-protein] + ADP + H(+). The enzyme catalyses L-seryl-[receptor-protein] + ATP = O-phospho-L-seryl-[receptor-protein] + ADP + H(+). In terms of biological role, serine/threonine protein kinase which forms a receptor complex on ligand binding. The receptor complex consists of 2 type II and 2 type I transmembrane serine/threonine kinases. Type II receptors phosphorylate and activate type I receptors which autophosphorylate, then bind and activate SMAD transcriptional regulators, SMAD2 and SMAD3. Receptor for activin AB, activin B, activin E and NODAL. Upon NODAL binding, activation results in increased apoptosis and reduced proliferation through suppression of AKT signaling and the activation of Smad2-dependent signaling pathway in pancreatic beta-cells, trophoblasts, epithelial or neuronal cells. Acts as a positive regulator for macrophage activation partially through down-regulation of PPARG expression. The sequence is that of Activin receptor type-1C from Homo sapiens (Human).